The following is a 448-amino-acid chain: MSPAFRTMDVEPRTKGILLEPFVHQVGGHSCVLRFNETTLCKPLVPREHQFYETLPAEMRRFTPQYKAVLIFVRCADEFGASGNIETKEQGVVSVRFEEDEDRNLCLIAYPLKGDHGTVDIVDNSDCEPKSKLLRWTNKKHHALETEKNPKDWVRQHRKEEKMKSHKLEEEFEWLKKSEVLYYSVEKKGNVSSQLKHYNPWSMKCHQQQLQRMKENAKHRNQYKFILLENLTSRYEVPCVLDLKMGTRQHGDDASEEKAANQIRKCQQSTSAVIGVRVCGMQVYQAGTGQLMFMNKYHGRKLSVQGFKEALFQFFHNGRYLRRELLGPVLKKLTELKAVLERQESYRFYSSSLLVIYDGKEWPEVTLDSDAEDLEDLSEESADESAGAYAYKPIGASSVDVRMIDFAHTTCRLYGEDSVVHEGQDAGYIFGLQSLIDIVTEISEESGE.

ATP contacts are provided by residues 229 to 231 (ENL) and D242. Substrate-binding positions include 238–246 (PCVLDLKMG), K244, and 258–265 (KAANQIRK). Residue D405 participates in ATP binding. Residue H408 coordinates substrate.

The protein belongs to the inositol phosphokinase (IPK) family. As to expression, highly expressed in brain and lung, and at slightly lower levels in liver, kidney and testis.

It is found in the nucleus. The enzyme catalyses 1D-myo-inositol hexakisphosphate + ATP = 5-diphospho-1D-myo-inositol 1,2,3,4,6-pentakisphosphate + ADP. It functions in the pathway phospholipid metabolism; phosphatidylinositol metabolism. In terms of biological role, converts inositol hexakisphosphate (InsP6) to diphosphoinositol pentakisphosphate (InsP7/PP-InsP5). May play a role in the regulation of Na(+)-dependent phosphate cotransport, possibly via its role in diphosphoinositol pentakisphosphate (InsP7/PP-InsP5) biosynthesis. This chain is Inositol hexakisphosphate kinase 2 (Ip6k2), found in Mus musculus (Mouse).